Reading from the N-terminus, the 190-residue chain is Protein shisa-like-2A (190 aa).

The next 2 membrane-spanning stretches (helical) occupy residues 48–68 (SFFP…LIGL) and 70–90 (VAAV…YLFI).

Belongs to the shisa family.

Its subcellular location is the membrane. This chain is Protein shisa-like-2A, found in Homo sapiens (Human).